The following is a 589-amino-acid chain: Transcription factor 4 (589 aa).

Disordered regions lie at residues 1-124 (MTSR…SSSK), 138-163 (DGHH…MLGN), 184-239 (PSHS…SQTG), 254-297 (HTNN…EGPL), 384-492 (SLLP…MANN), and 556-589 (KRRE…MGQM). 2 positions are modified to phosphoserine: Ser8 and Ser13. The segment covering 56 to 74 (GTLSPTKPGSQYYPYSSNN) has biased composition (polar residues). Positions 136–157 (MQDGHHSSDPWSSSSGMNQPGY) are leucine-zipper. Polar residues predominate over residues 184–224 (PSHSSADINSSLPPMSTFHRSGTNHYSTSSCTPPANGTDSI). Positions 255–266 (TNNSFSSNPSTP) are enriched in low complexity. The span at 283-292 (NGGQASSSPN) shows a compositional bias: polar residues. Ser290 carries the post-translational modification Phosphoserine. The class A specific domain stretch occupies residues 380 to 403 (RGSHSLLPNQVPVPQLPVQSATSP). Composition is skewed to low complexity over residues 385-398 (LLPN…LPVQ) and 421-430 (GQSVSSGSSE). Ser433 carries the phosphoserine modification. Composition is skewed to basic and acidic residues over residues 445–461 (KSSE…DIKS) and 477–492 (PEQK…MANN). Residues 486 to 539 (ERRMANNARERLRVRDINEAFKELGRMVQLHLKSDKPQTKLLILHQAVAVILSL) enclose the bHLH domain.

In terms of assembly, efficient DNA binding requires dimerization with another bHLH protein. Forms homo- or heterooligomers with myogenin. Interacts with HIVEP2. Interacts with NEUROD2. Interacts with AGBL1.

The protein resides in the nucleus. In terms of biological role, transcription factor that binds to the immunoglobulin enhancer Mu-E5/KE5-motif. Involved in the initiation of neuronal differentiation. Activates transcription by binding to the E box (5'-CANNTG-3'). Binds to the E-box present in the somatostatin receptor 2 initiator element (SSTR2-INR) to activate transcription. Interacts with the CCAAT displacement protein (CDP2) to bind the tyrosine hydroxylase enhancer. The polypeptide is Transcription factor 4 (Tcf4) (Rattus norvegicus (Rat)).